The chain runs to 356 residues: Guanine nucleotide-binding protein alpha-2 subunit (356 aa).

G2 carries the N-myristoyl glycine lipid modification. C4 carries S-palmitoyl cysteine lipidation. Positions 35–356 (REVKLLLLGA…LTNNLRDIVL (322 aa)) constitute a G-alpha domain. Positions 38–51 (KLLLLGAGESGKST) are G1 motif. GTP is bound by residues E46, S47, G48, K49, S50, T51, D153, L178, T184, G206, N272, K273, D275, and A329. Mg(2+) is bound at residue S50. The interval 176–184 (DILRCRNKT) is G2 motif. A Mg(2+)-binding site is contributed by T184. Residues 199-208 (YRIFDVGGQR) form a G3 motif region. Residues 268-275 (ILFLNKVD) are G4 motif. A G5 motif region spans residues 327–332 (TNATDV).

This sequence belongs to the G-alpha family. In terms of assembly, g proteins are composed of 3 units; alpha, beta and gamma. The alpha chain contains the guanine nucleotide binding site. Requires Mg(2+) as cofactor.

Functionally, guanine nucleotide-binding proteins (G proteins) are involved as modulators or transducers in various transmembrane signaling systems. The sequence is that of Guanine nucleotide-binding protein alpha-2 subunit (GPA2) from Mycosarcoma maydis (Corn smut fungus).